Here is a 104-residue protein sequence, read N- to C-terminus: L-rhamnose mutarotase (104 aa).

Tyr-18 is a substrate binding site. The Proton donor role is filled by His-22. Substrate contacts are provided by residues Tyr-41 and 76–77; that span reads WW.

This sequence belongs to the rhamnose mutarotase family. As to quaternary structure, homodimer.

The protein localises to the cytoplasm. It catalyses the reaction alpha-L-rhamnose = beta-L-rhamnose. It functions in the pathway carbohydrate metabolism; L-rhamnose metabolism. Involved in the anomeric conversion of L-rhamnose. The sequence is that of L-rhamnose mutarotase from Salmonella newport (strain SL254).